A 359-amino-acid chain; its full sequence is Peptide chain release factor 1 (359 aa).

N5-methylglutamine is present on Q235.

Belongs to the prokaryotic/mitochondrial release factor family. Post-translationally, methylated by PrmC. Methylation increases the termination efficiency of RF1.

It is found in the cytoplasm. In terms of biological role, peptide chain release factor 1 directs the termination of translation in response to the peptide chain termination codons UAG and UAA. The chain is Peptide chain release factor 1 from Chelativorans sp. (strain BNC1).